The following is a 372-amino-acid chain: Fork head domain-containing protein FD4 (372 aa).

A DNA-binding region (fork-head) is located at residues 12-103 (QKPPYSYISL…FDMFENGSLL (92 aa)). Disordered stretches follow at residues 225–245 (ESLI…DEDD) and 261–281 (PTTP…RTED).

As to expression, expressed in early embryogenesis in 14 symmetrical pairs of segmentally arranged neuroblasts. Also, later in embryogenesis, in a cluster of cells in head region.

It is found in the nucleus. Involved in development during embryogenesis. The protein is Fork head domain-containing protein FD4 (fd96Ca) of Drosophila melanogaster (Fruit fly).